The primary structure comprises 398 residues: Mannitol-1-phosphate 5-dehydrogenase (398 aa).

10–21 (AVHFGAGNIGRG) is a binding site for NAD(+). Residue Lys-221 is part of the active site.

This sequence belongs to the mannitol dehydrogenase family. In terms of assembly, monomer.

It catalyses the reaction D-mannitol 1-phosphate + NAD(+) = beta-D-fructose 6-phosphate + NADH + H(+). Catalyzes the NAD(H)-dependent interconversion of D-fructose 6-phosphate and D-mannitol 1-phosphate in the mannitol metabolic pathway. This chain is Mannitol-1-phosphate 5-dehydrogenase, found in Neurospora crassa (strain ATCC 24698 / 74-OR23-1A / CBS 708.71 / DSM 1257 / FGSC 987).